Reading from the N-terminus, the 1229-residue chain is Membrane-anchored lipid-binding protein SIP3 (1229 aa).

Topologically, residues 1-1066 are cytoplasmic; sequence MSVHGRDPKK…AEKFSRINRM (1066 aa). Positions 309–423 constitute a PH domain; sequence SPEKSGWLYM…WLIAFEATKK (115 aa). One can recognise a VASt domain in the interval 771-976; sequence EYSITYNHEY…VLRYYLEKIG (206 aa). A helical membrane pass occupies residues 1067 to 1087; the sequence is MVVGLLASIMINILLSEKASV. Over 1088–1229 the chain is Lumenal; sequence PYWSIKRAEK…ELEKLRPPIT (142 aa). Asn-1206 carries an N-linked (GlcNAc...) asparagine glycan.

This sequence belongs to the SIP3 family. As to quaternary structure, interacts with SNF1.

It is found in the endoplasmic reticulum membrane. Its function is as follows. May be involved in sterol transfer between intracellular membranes. This chain is Membrane-anchored lipid-binding protein SIP3, found in Saccharomyces cerevisiae (strain ATCC 204508 / S288c) (Baker's yeast).